Here is a 92-residue protein sequence, read N- to C-terminus: Small ribosomal subunit protein uS17 (92 aa).

It belongs to the universal ribosomal protein uS17 family. In terms of assembly, part of the 30S ribosomal subunit.

One of the primary rRNA binding proteins, it binds specifically to the 5'-end of 16S ribosomal RNA. This Cupriavidus pinatubonensis (strain JMP 134 / LMG 1197) (Cupriavidus necator (strain JMP 134)) protein is Small ribosomal subunit protein uS17.